Reading from the N-terminus, the 215-residue chain is Adenylate kinase (215 aa).

10–15 contacts ATP; sequence GAGKGT. The interval 30–59 is NMP; the sequence is STGDILRANVRDGTKLGKEAKGYMDKGELV. AMP contacts are provided by residues Thr31, Arg36, 57-59, 85-88, and Gln92; these read ELV and GYPR. Residues 126 to 162 form an LID region; sequence GRYVCTCGESYHMKFNPPKKENVCDACGADLYQRDDD. Arg127 contributes to the ATP binding site. 2 residues coordinate Zn(2+): Cys130 and Cys132. 135–136 is a binding site for ATP; it reads SY. Cys149 and Cys152 together coordinate Zn(2+). The AMP site is built by Arg159 and Arg170. Gly198 provides a ligand contact to ATP.

The protein belongs to the adenylate kinase family. As to quaternary structure, monomer.

Its subcellular location is the cytoplasm. It carries out the reaction AMP + ATP = 2 ADP. It functions in the pathway purine metabolism; AMP biosynthesis via salvage pathway; AMP from ADP: step 1/1. In terms of biological role, catalyzes the reversible transfer of the terminal phosphate group between ATP and AMP. Plays an important role in cellular energy homeostasis and in adenine nucleotide metabolism. In Methanococcoides burtonii (strain DSM 6242 / NBRC 107633 / OCM 468 / ACE-M), this protein is Adenylate kinase.